Reading from the N-terminus, the 377-residue chain is Probable transposase for insertion sequence element IS5377 (377 aa).

The protein belongs to the transposase 11 family.

This Geobacillus stearothermophilus (Bacillus stearothermophilus) protein is Probable transposase for insertion sequence element IS5377.